We begin with the raw amino-acid sequence, 682 residues long: Potassium-transporting ATPase ATP-binding subunit (682 aa).

A run of 4 helical transmembrane segments spans residues Pro34–Val54, Ala62–Ala82, Ile219–Leu239, and Val254–Ile274. The 4-aspartylphosphate intermediate role is filled by Asp307. ATP is bound by residues Asp344, Glu348, Phe377–Ser384, and Lys395. Mg(2+)-binding residues include Asp518 and Asp522. 3 helical membrane-spanning segments follow: residues Phe588–Met608, Ala616–Leu636, and Leu662–Ala682.

Belongs to the cation transport ATPase (P-type) (TC 3.A.3) family. Type IA subfamily. The system is composed of three essential subunits: KdpA, KdpB and KdpC.

Its subcellular location is the cell inner membrane. The enzyme catalyses K(+)(out) + ATP + H2O = K(+)(in) + ADP + phosphate + H(+). In terms of biological role, part of the high-affinity ATP-driven potassium transport (or Kdp) system, which catalyzes the hydrolysis of ATP coupled with the electrogenic transport of potassium into the cytoplasm. This subunit is responsible for energy coupling to the transport system and for the release of the potassium ions to the cytoplasm. The chain is Potassium-transporting ATPase ATP-binding subunit from Salmonella schwarzengrund (strain CVM19633).